A 1226-amino-acid chain; its full sequence is Methionine synthase (1226 aa).

The Hcy-binding domain occupies K7–V327. Positions 249, 312, and 313 each coordinate Zn(2+). One can recognise a Pterin-binding domain in the interval F358 to E619. One can recognise a B12-binding N-terminal domain in the interval S652–A746. Methylcob(III)alamin-binding positions include E696, G758–D762, H761, S806, T810, and A862. The region spanning N748–E883 is the B12-binding domain. The region spanning K899–N1226 is the AdoMet activation domain. Residues D949, R1137, and Y1192–F1193 contribute to the S-adenosyl-L-methionine site.

Belongs to the vitamin-B12 dependent methionine synthase family. Methylcob(III)alamin serves as cofactor. Requires Zn(2+) as cofactor.

It carries out the reaction (6S)-5-methyl-5,6,7,8-tetrahydrofolate + L-homocysteine = (6S)-5,6,7,8-tetrahydrofolate + L-methionine. It participates in amino-acid biosynthesis; L-methionine biosynthesis via de novo pathway; L-methionine from L-homocysteine (MetH route): step 1/1. In terms of biological role, catalyzes the transfer of a methyl group from methyl-cobalamin to homocysteine, yielding enzyme-bound cob(I)alamin and methionine. Subsequently, remethylates the cofactor using methyltetrahydrofolate. The protein is Methionine synthase (metH) of Aliivibrio fischeri (strain ATCC 700601 / ES114) (Vibrio fischeri).